The sequence spans 177 residues: Large ribosomal subunit protein uL6 (177 aa).

It belongs to the universal ribosomal protein uL6 family. As to quaternary structure, part of the 50S ribosomal subunit.

In terms of biological role, this protein binds to the 23S rRNA, and is important in its secondary structure. It is located near the subunit interface in the base of the L7/L12 stalk, and near the tRNA binding site of the peptidyltransferase center. The polypeptide is Large ribosomal subunit protein uL6 (Rhizobium etli (strain ATCC 51251 / DSM 11541 / JCM 21823 / NBRC 15573 / CFN 42)).